A 390-amino-acid chain; its full sequence is uncharacterized protein (390 aa).

Transmembrane regions (helical) follow at residues 27–47 and 356–376; these read GGLI…MEWI and FGGF…LASF.

This sequence belongs to the ERGIC family.

It is found in the membrane. This is an uncharacterized protein from Schizosaccharomyces pombe (strain 972 / ATCC 24843) (Fission yeast).